The following is a 369-amino-acid chain: uncharacterized protein (369 aa).

9 consecutive transmembrane segments (helical) span residues Q25–W45, F47–E67, L119–M139, I152–L172, G206–I226, L235–L255, L268–I288, L295–F315, and W323–F343.

The protein to B.subtilis ComEC.

The protein localises to the cell membrane. This is an uncharacterized protein from Mycoplasma pneumoniae (strain ATCC 29342 / M129 / Subtype 1) (Mycoplasmoides pneumoniae).